The primary structure comprises 246 residues: Octanoyltransferase (246 aa).

The 182-residue stretch at 50–231 (PDTDDEIWVV…RLIAHLDGAT (182 aa)) folds into the BPL/LPL catalytic domain. Substrate is bound by residues 90–97 (RGGQITYH), 162–164 (ALG), and 175–177 (GLS). Residue C193 is the Acyl-thioester intermediate of the active site.

The protein belongs to the LipB family.

The protein resides in the cytoplasm. The catalysed reaction is octanoyl-[ACP] + L-lysyl-[protein] = N(6)-octanoyl-L-lysyl-[protein] + holo-[ACP] + H(+). The protein operates within protein modification; protein lipoylation via endogenous pathway; protein N(6)-(lipoyl)lysine from octanoyl-[acyl-carrier-protein]: step 1/2. Catalyzes the transfer of endogenously produced octanoic acid from octanoyl-acyl-carrier-protein onto the lipoyl domains of lipoate-dependent enzymes. Lipoyl-ACP can also act as a substrate although octanoyl-ACP is likely to be the physiological substrate. The chain is Octanoyltransferase from Burkholderia pseudomallei (strain 1106a).